The chain runs to 392 residues: Imidazolonepropionase (392 aa).

Residues H70 and H72 each coordinate Fe(3+). Residues H70 and H72 each contribute to the Zn(2+) site. R79, Y137, and H164 together coordinate 4-imidazolone-5-propanoate. Y137 is a binding site for N-formimidoyl-L-glutamate. H227 serves as a coordination point for Fe(3+). Residue H227 participates in Zn(2+) binding. Residue Q230 coordinates 4-imidazolone-5-propanoate. D301 contacts Fe(3+). A Zn(2+)-binding site is contributed by D301. N-formimidoyl-L-glutamate is bound by residues N303 and G305. T306 contacts 4-imidazolone-5-propanoate.

The protein belongs to the metallo-dependent hydrolases superfamily. HutI family. Zn(2+) serves as cofactor. The cofactor is Fe(3+).

Its subcellular location is the cytoplasm. The catalysed reaction is 4-imidazolone-5-propanoate + H2O = N-formimidoyl-L-glutamate. Its pathway is amino-acid degradation; L-histidine degradation into L-glutamate; N-formimidoyl-L-glutamate from L-histidine: step 3/3. Functionally, catalyzes the hydrolytic cleavage of the carbon-nitrogen bond in imidazolone-5-propanoate to yield N-formimidoyl-L-glutamate. It is the third step in the universal histidine degradation pathway. In Nocardia farcinica (strain IFM 10152), this protein is Imidazolonepropionase.